The chain runs to 1133 residues: Nuclear pore complex-interacting protein family member B5 (1133 aa).

A helical transmembrane segment spans residues 60-84 (WLHVIIAFPTSYKVVITLWIVYLWV). 3 disordered regions span residues 241 to 262 (NRMGHQPPPPTQQHSITDNSLS), 290 to 575 (LTPL…IKTP), and 868 to 1133 (ERLR…RRLS). Polar residues predominate over residues 252–262 (QQHSITDNSLS). Residues 349–359 (PLPPSALPSAP) show a composition bias toward pro residues. Composition is skewed to basic and acidic residues over residues 406 to 416 (DNIKTPAERLR), 448 to 458 (DNIKTPAERLR), 490 to 500 (DNIKTPAERLR), 528 to 538 (DNIKTPAERLR), 903 to 913 (DNIKTPAERLR), 945 to 955 (DNIKTPAERLR), and 987 to 997 (DNIKTPAERLR).

This sequence belongs to the NPIP family.

It is found in the membrane. The sequence is that of Nuclear pore complex-interacting protein family member B5 (NPIPB5) from Homo sapiens (Human).